Consider the following 560-residue polypeptide: Probable 2,3-bisphosphoglycerate-independent phosphoglycerate mutase 2 (560 aa).

N-acetylglycine is present on glycine 2. Residues aspartate 29 and serine 82 each coordinate Mn(2+). The active-site Phosphoserine intermediate is the serine 82. Residues histidine 141, 171–172 (RD), arginine 207, arginine 214, 287–290 (RADR), and lysine 362 contribute to the substrate site. Mn(2+) contacts are provided by aspartate 431, histidine 435, aspartate 472, histidine 473, and histidine 502.

Belongs to the BPG-independent phosphoglycerate mutase family. As to quaternary structure, monomer. The cofactor is Mn(2+).

Its subcellular location is the cytoplasm. The enzyme catalyses (2R)-2-phosphoglycerate = (2R)-3-phosphoglycerate. It participates in carbohydrate degradation; glycolysis; pyruvate from D-glyceraldehyde 3-phosphate: step 3/5. Functionally, catalyzes the interconversion of 2-phosphoglycerate (2-PGA) and 3-phosphoglycerate (3-PGA). Required for guard cell function (e.g. blue light-, abscisic acid- (ABA), and low CO(2)-regulated stomatal movements) and fertility (e.g. pollen grains production). The protein is Probable 2,3-bisphosphoglycerate-independent phosphoglycerate mutase 2 (PGM2) of Arabidopsis thaliana (Mouse-ear cress).